We begin with the raw amino-acid sequence, 451 residues long: AP-3 complex subunit mu (451 aa).

Residues 191 to 450 (NNEIYVDLVE…TSRAGDYIVR (260 aa)) form the MHD domain.

Belongs to the adaptor complexes medium subunit family. Adaptor protein complex 3 (AP-3) is a heterotetramer composed of 2 large adaptins (APL5 and APL6), a medium adaptin (APM3) and a small adaptin (APS3).

It is found in the golgi apparatus. Its subcellular location is the cytoplasmic vesicle membrane. Its function is as follows. Part of the AP-3 complex, an adaptor-related complex which is not clathrin-associated. The complex is associated with the Golgi region as well as more peripheral structures. It facilitates the budding of vesicles from the Golgi membrane and may be directly involved in trafficking to the vacuole. This chain is AP-3 complex subunit mu (APM3), found in Eremothecium gossypii (strain ATCC 10895 / CBS 109.51 / FGSC 9923 / NRRL Y-1056) (Yeast).